Reading from the N-terminus, the 220-residue chain is 6-phosphogluconolactonase (220 aa).

The protein belongs to the glucosamine/galactosamine-6-phosphate isomerase family. 6-phosphogluconolactonase subfamily.

The catalysed reaction is 6-phospho-D-glucono-1,5-lactone + H2O = 6-phospho-D-gluconate + H(+). It participates in carbohydrate degradation; pentose phosphate pathway; D-ribulose 5-phosphate from D-glucose 6-phosphate (oxidative stage): step 2/3. Hydrolysis of 6-phosphogluconolactone to 6-phosphogluconate. The sequence is that of 6-phosphogluconolactonase (pgl) from Thermotoga maritima (strain ATCC 43589 / DSM 3109 / JCM 10099 / NBRC 100826 / MSB8).